A 182-amino-acid polypeptide reads, in one-letter code: Transcription termination/antitermination protein NusG (182 aa).

The KOW domain maps to 131–161 (GEVVRVNEGPFADFNGTVEEVDYEKSRLKVS).

It belongs to the NusG family.

In terms of biological role, participates in transcription elongation, termination and antitermination. The protein is Transcription termination/antitermination protein NusG of Vibrio parahaemolyticus serotype O3:K6 (strain RIMD 2210633).